A 623-amino-acid polypeptide reads, in one-letter code: Mu-like prophage FluMu defective tail fiber protein (623 aa).

To phage Mu protein S.

The protein is Mu-like prophage FluMu defective tail fiber protein of Haemophilus influenzae (strain ATCC 51907 / DSM 11121 / KW20 / Rd).